The sequence spans 721 residues: Fatty acid oxidation complex subunit alpha (721 aa).

The interval 1-190 (MIYEGKAITV…KVGAVDAVVA (190 aa)) is enoyl-CoA hydratase/isomerase. Asp-297 is a substrate binding site. Residues 312 to 721 (KDVKQAAVLG…SFFGQASSEE (410 aa)) form a 3-hydroxyacyl-CoA dehydrogenase region. Residues Met-325, Asp-344, 401–403 (VVE), Lys-408, and Ser-430 each bind NAD(+). His-451 functions as the For 3-hydroxyacyl-CoA dehydrogenase activity in the catalytic mechanism. Residue Asn-454 participates in NAD(+) binding. Residues Asn-501 and Tyr-660 each coordinate substrate.

In the N-terminal section; belongs to the enoyl-CoA hydratase/isomerase family. It in the C-terminal section; belongs to the 3-hydroxyacyl-CoA dehydrogenase family. Heterotetramer of two alpha chains (FadB) and two beta chains (FadA).

It carries out the reaction a (3S)-3-hydroxyacyl-CoA + NAD(+) = a 3-oxoacyl-CoA + NADH + H(+). It catalyses the reaction a (3S)-3-hydroxyacyl-CoA = a (2E)-enoyl-CoA + H2O. The catalysed reaction is a 4-saturated-(3S)-3-hydroxyacyl-CoA = a (3E)-enoyl-CoA + H2O. The enzyme catalyses (3S)-3-hydroxybutanoyl-CoA = (3R)-3-hydroxybutanoyl-CoA. It carries out the reaction a (3Z)-enoyl-CoA = a 4-saturated (2E)-enoyl-CoA. It catalyses the reaction a (3E)-enoyl-CoA = a 4-saturated (2E)-enoyl-CoA. It participates in lipid metabolism; fatty acid beta-oxidation. Its function is as follows. Involved in the aerobic and anaerobic degradation of long-chain fatty acids via beta-oxidation cycle. Catalyzes the formation of 3-oxoacyl-CoA from enoyl-CoA via L-3-hydroxyacyl-CoA. It can also use D-3-hydroxyacyl-CoA and cis-3-enoyl-CoA as substrate. The protein is Fatty acid oxidation complex subunit alpha of Pseudomonas savastanoi pv. phaseolicola (strain 1448A / Race 6) (Pseudomonas syringae pv. phaseolicola (strain 1448A / Race 6)).